The chain runs to 333 residues: S-adenosylmethionine-dependent nucleotide dehydratase (333 aa).

One can recognise a Radical SAM core domain in the interval 1-239; that stretch reads MNIKTIVINW…SAPQKQNNVI (239 aa). 3 residues coordinate [4Fe-4S] cluster: Cys16, Cys20, and Cys23.

This sequence belongs to the radical SAM superfamily. Viperin family. [4Fe-4S] cluster serves as cofactor.

The catalysed reaction is GTP + AH2 + S-adenosyl-L-methionine = 3'-deoxy-3',4'-didehydro-GTP + 5'-deoxyadenosine + L-methionine + A + H2O + H(+). Its function is as follows. Expression of pVip56 in E.coli (strain MG1655) confers resistance to phage P1; has no effect against T7. Catalyzes the conversion of guanosine triphosphate (GTP) to 3'-deoxy-3',4'-didehydro-GTP (ddhGTP), probably via a SAM-dependent radical mechanism. The modified nucleotide represses transcription from T7 RNA polymerase-directed genes (possibly by acting as chain terminators), strongly suggesting these nucleotides block viral polymerase transcription. How this protein allows bacteria to resist viruses that do not encode their own RNA polymerase (such as lambda, P1) is unknown. This Fibrobacter sp. (strain UWH6) protein is S-adenosylmethionine-dependent nucleotide dehydratase.